Reading from the N-terminus, the 59-residue chain is UPF0181 protein YoaH (59 aa).

The protein belongs to the UPF0181 family.

This chain is UPF0181 protein YoaH, found in Shigella flexneri serotype 5b (strain 8401).